The primary structure comprises 41 residues: Cytochrome b559 subunit beta (41 aa).

A helical membrane pass occupies residues 16–32 (WLAVHALAVPTVFFLGS). His-20 lines the heme pocket.

The protein belongs to the PsbE/PsbF family. In terms of assembly, heterodimer of an alpha subunit and a beta subunit. PSII is composed of 1 copy each of membrane proteins PsbA, PsbB, PsbC, PsbD, PsbE, PsbF, PsbH, PsbI, PsbJ, PsbK, PsbL, PsbM, PsbT, PsbX, PsbY, PsbZ, Psb30/Ycf12, at least 3 peripheral proteins of the oxygen-evolving complex and a large number of cofactors. It forms dimeric complexes. Heme b is required as a cofactor.

It localises to the plastid. The protein resides in the chloroplast thylakoid membrane. In terms of biological role, this b-type cytochrome is tightly associated with the reaction center of photosystem II (PSII). PSII is a light-driven water:plastoquinone oxidoreductase that uses light energy to abstract electrons from H(2)O, generating O(2) and a proton gradient subsequently used for ATP formation. It consists of a core antenna complex that captures photons, and an electron transfer chain that converts photonic excitation into a charge separation. This chain is Cytochrome b559 subunit beta, found in Nephroselmis olivacea (Green alga).